The primary structure comprises 383 residues: NIPA-like protein 2 (383 aa).

N-linked (GlcNAc...) asparagine glycosylation is found at asparagine 23 and asparagine 33. The next 9 helical transmembrane spans lie at isoleucine 46–asparagine 66, valine 88–tyrosine 108, leucine 115–leucine 135, leucine 144–isoleucine 164, phenylalanine 177–leucine 197, isoleucine 208–alanine 228, leucine 243–valine 263, valine 278–tyrosine 298, and phenylalanine 306–valine 326. The segment at aspartate 352 to serine 383 is disordered.

The protein belongs to the NIPA family.

It localises to the membrane. The chain is NIPA-like protein 2 (Nipal2) from Mus musculus (Mouse).